A 4699-amino-acid polypeptide reads, in one-letter code: Fat-like cadherin-related tumor suppressor homolog (4699 aa).

The first 38 residues, methionine 1–serine 38, serve as a signal peptide directing secretion. The Extracellular segment spans residues lysine 39–glycine 4285. 34 Cadherin domains span residues serine 63–phenylalanine 183, tyrosine 184–isoleucine 291, alanine 288–phenylalanine 400, threonine 401–phenylalanine 507, glutamate 508–phenylalanine 613, glutamate 614–leucine 716, valine 773–isoleucine 877, glutamine 878–phenylalanine 980, glycine 981–phenylalanine 1088, aspartate 1089–tyrosine 1198, aspartate 1194–phenylalanine 1299, aspartate 1300–isoleucine 1405, lysine 1408–phenylalanine 1506, alanine 1507–phenylalanine 1612, threonine 1613–phenylalanine 1717, proline 1718–phenylalanine 1815, valine 1816–phenylalanine 1932, asparagine 1933–phenylalanine 2033, glutamine 2034–phenylalanine 2140, valine 2141–phenylalanine 2241, glutamate 2242–isoleucine 2341, glutamate 2342–phenylalanine 2449, valine 2450–phenylalanine 2551, aspartate 2552–phenylalanine 2654, leucine 2655–phenylalanine 2763, glutamate 2764–phenylalanine 2860, aspartate 2861–phenylalanine 2967, lysine 2968–tyrosine 3072, leucine 3068–phenylalanine 3169, serine 3170–phenylalanine 3273, serine 3274–phenylalanine 3378, leucine 3379–phenylalanine 3483, serine 3484–valine 3588, and threonine 3589–phenylalanine 3696. N-linked (GlcNAc...) asparagine glycosylation is found at asparagine 68 and asparagine 159. Residue asparagine 367 is glycosylated (N-linked (GlcNAc...) asparagine). Asparagine 782, asparagine 846, and asparagine 926 each carry an N-linked (GlcNAc...) asparagine glycan. N-linked (GlcNAc...) asparagine glycans are attached at residues asparagine 1109, asparagine 1201, asparagine 1315, asparagine 1442, asparagine 1476, and asparagine 1514. Intrachain disulfides connect cysteine 3807–cysteine 3819, cysteine 3814–cysteine 3851, cysteine 3853–cysteine 3862, cysteine 3869–cysteine 3880, cysteine 3874–cysteine 3891, cysteine 3893–cysteine 3902, cysteine 4071–cysteine 4105, cysteine 4117–cysteine 4128, cysteine 4122–cysteine 4138, cysteine 4140–cysteine 4149, cysteine 4156–cysteine 4167, cysteine 4161–cysteine 4177, cysteine 4179–cysteine 4188, cysteine 4194–cysteine 4205, cysteine 4199–cysteine 4214, cysteine 4216–cysteine 4224, cysteine 4231–cysteine 4242, cysteine 4236–cysteine 4251, and cysteine 4253–cysteine 4262. Positions threonine 3865 to glutamate 3903 constitute an EGF-like 1 domain. The Laminin G-like domain occupies alanine 3921 to cysteine 4105. EGF-like domains follow at residues arginine 4113–glutamate 4150, aspartate 4152–glutamate 4189, tyrosine 4190–glutamate 4225, and aspartate 4227–glycine 4263. A helical transmembrane segment spans residues isoleucine 4286–leucine 4306. Over lysine 4307–asparagine 4699 the chain is Cytoplasmic.

As to expression, localizes where basal actin filaments terminate.

The protein resides in the cell membrane. Functionally, required for the planar polarity of actin filament orientation at the basal side of ovarian follicle cells. Required for proper egg chamber shape and elongation of the egg chamber during oogenesis. Required for the correct planar polarization of Rab10 within the basal follicle cell epithelium and is therefore indirectly involved in the Rab10-dependent remodeling of the basal membrane during egg chamber elongation. This is Fat-like cadherin-related tumor suppressor homolog (kug) from Drosophila melanogaster (Fruit fly).